A 605-amino-acid polypeptide reads, in one-letter code: DNA primase (605 aa).

The CHC2-type zinc finger occupies 38-62 (CPFHDEKTPSFTVSEDKQICHCFGC). The region spanning 260–341 (DEIVLLEGFM…NVFVIQLPSG (82 aa)) is the Toprim domain. Mg(2+) contacts are provided by Glu266, Asp310, and Asp312.

It belongs to the DnaG primase family. As to quaternary structure, monomer. Interacts with DnaB. The cofactor is Zn(2+). Mg(2+) is required as a cofactor.

It catalyses the reaction ssDNA + n NTP = ssDNA/pppN(pN)n-1 hybrid + (n-1) diphosphate.. In terms of biological role, RNA polymerase that catalyzes the synthesis of short RNA molecules used as primers for DNA polymerase during DNA replication. This Staphylococcus aureus (strain MSSA476) protein is DNA primase.